The following is a 135-amino-acid chain: Helix-loop-helix protein 2 (135 aa).

Residues 1 to 80 (MMLSPDQAAD…RRRATAKYRS (80 aa)) form a disordered region. Residues 10 to 21 (DSDHPSSAHSDP) are compositionally biased toward basic and acidic residues. A compositionally biased stretch (basic residues) spans 68 to 80 (KRRRRRATAKYRS). One can recognise a bHLH domain in the interval 77-129 (KYRSAHATRERIRVEAFNLAFAELRKLLPTLPPDKKLSKIEILRLAICYISYL).

As to quaternary structure, homodimer. Interacts and may form heterodimers with STAT3.

It localises to the nucleus. Functionally, transcription factor which binds the E box motif 5'-CA[TC][AG]TG-3'. Involved in regulating energy expenditure, body mass, voluntary physical activity, mating behavior and reproductive longevity, acting through the hypothalamic-pituitary-gonadal axis. Acts as a transcriptional activator of target genes, including NDN, PCSK1, MC4R. Is also a transcriptional activator of KISS1. May act centrally to regulate function of both white and brown adipose tissue. Together with NHLH1, required to maintain migration and survival of cells in the anterior extramural migration stream (aes), which forms the precerebellar nuclei. Also, in concert with NHLH1, may determine fate of gonadotropin releasing hormone-1 (GnRH-1) neurons. The protein is Helix-loop-helix protein 2 (NHLH2) of Homo sapiens (Human).